We begin with the raw amino-acid sequence, 255 residues long: Fasciclin-like arabinogalactan protein 14 (255 aa).

A signal peptide spans 1–23 (MSSSLTIFFFFFASTFLYTSSNS). The FAS1 domain occupies 24 to 169 (FNITNILNEH…ISVLHISSAI (146 aa)). N25, N99, N125, and N159 each carry an N-linked (GlcNAc...) asparagine glycan. The tract at residues 179 to 231 (PTASPLSPVSSPPRPAESPNDDGQDFDEPPSSAPGAAADEPSENAGSANGVSR) is disordered. Positions 197 to 206 (PNDDGQDFDE) are enriched in acidic residues. The span at 222–231 (NAGSANGVSR) shows a compositional bias: polar residues. Residue S225 is the site of GPI-anchor amidated serine attachment. Positions 226–255 (ANGVSRNDSQPAFAFTLLMSFIWWFMARLR) are cleaved as a propeptide — removed in mature form.

This sequence belongs to the fasciclin-like AGP family.

Its subcellular location is the cell membrane. Its function is as follows. May be a cell surface adhesion protein. In Arabidopsis thaliana (Mouse-ear cress), this protein is Fasciclin-like arabinogalactan protein 14 (FLA14).